A 311-amino-acid polypeptide reads, in one-letter code: tRNA-cytidine(32) 2-sulfurtransferase (311 aa).

A PP-loop motif motif is present at residues 58–63; it reads SGGKDS. Cys133, Cys136, and Cys224 together coordinate [4Fe-4S] cluster.

It belongs to the TtcA family. In terms of assembly, homodimer. It depends on Mg(2+) as a cofactor. Requires [4Fe-4S] cluster as cofactor.

The protein localises to the cytoplasm. The enzyme catalyses cytidine(32) in tRNA + S-sulfanyl-L-cysteinyl-[cysteine desulfurase] + AH2 + ATP = 2-thiocytidine(32) in tRNA + L-cysteinyl-[cysteine desulfurase] + A + AMP + diphosphate + H(+). Its pathway is tRNA modification. Its function is as follows. Catalyzes the ATP-dependent 2-thiolation of cytidine in position 32 of tRNA, to form 2-thiocytidine (s(2)C32). The sulfur atoms are provided by the cysteine/cysteine desulfurase (IscS) system. The chain is tRNA-cytidine(32) 2-sulfurtransferase from Polaromonas sp. (strain JS666 / ATCC BAA-500).